We begin with the raw amino-acid sequence, 247 residues long: 2,3-bisphosphoglycerate-dependent phosphoglycerate mutase (247 aa).

Substrate is bound by residues 8–15 (RHGESVWN), 21–22 (TG), Arg-60, 87–90 (ERHY), Lys-98, 114–115 (RR), and 183–184 (GN). The active-site Tele-phosphohistidine intermediate is the His-9. Glu-87 acts as the Proton donor/acceptor in catalysis.

The protein belongs to the phosphoglycerate mutase family. BPG-dependent PGAM subfamily.

It catalyses the reaction (2R)-2-phosphoglycerate = (2R)-3-phosphoglycerate. The protein operates within carbohydrate degradation; glycolysis; pyruvate from D-glyceraldehyde 3-phosphate: step 3/5. Its function is as follows. Catalyzes the interconversion of 2-phosphoglycerate and 3-phosphoglycerate. The polypeptide is 2,3-bisphosphoglycerate-dependent phosphoglycerate mutase (Thermobifida fusca (strain YX)).